Reading from the N-terminus, the 784-residue chain is Toll-like receptor 2 (784 aa).

The signal sequence occupies residues methionine 1–glycine 20. Over alanine 21–arginine 587 the chain is Extracellular. Cysteine 30 and cysteine 36 are disulfide-bonded. LRR repeat units follow at residues valine 54–asparagine 77, leucine 78–asparagine 101, leucine 102–alanine 125, leucine 126–asparagine 150, leucine 151–phenylalanine 175, leucine 176–asparagine 199, isoleucine 200–serine 223, leucine 224–serine 250, valine 251–glycine 278, isoleucine 279–asparagine 308, valine 309–lysine 337, valine 338–serine 361, leucine 362–phenylalanine 388, leucine 389–asparagine 414, leucine 415–lysine 437, methionine 438–glutamine 457, threonine 458–glutamine 478, leucine 479–valine 500, and leucine 501–glutamine 524. N-linked (GlcNAc...) asparagine glycosylation occurs at asparagine 114. Asparagine 199 carries N-linked (GlcNAc...) asparagine glycosylation. N-linked (GlcNAc...) asparagine glycosylation is present at asparagine 248. Cysteine 353 and cysteine 382 are oxidised to a cystine. A disulfide bridge connects residues cysteine 432 and cysteine 454. A glycan (N-linked (GlcNAc...) asparagine) is linked at asparagine 442. Residues leucine 525 to arginine 579 form the LRRCT domain. The chain crosses the membrane as a helical span at residues alanine 588 to leucine 608. The Cytoplasmic portion of the chain corresponds to cysteine 609–serine 784. The 144-residue stretch at isoleucine 639–isoleucine 782 folds into the TIR domain. Residue lysine 754 forms a Glycyl lysine isopeptide (Lys-Gly) (interchain with G-Cter in ubiquitin) linkage. Residues tyrosine 761 to leucine 778 carry the ATG16L1-binding motif motif.

The protein belongs to the Toll-like receptor family. Interacts with LY96, TLR1 and TLR6 (via extracellular domain). TLR2 seems to exist in heterodimers with either TLR1 or TLR6 before stimulation by the ligand. The heterodimers form bigger oligomers in response to their corresponding ligands as well as further heterotypic associations with other receptors such as CD14 and/or CD36. Binds MYD88 (via TIR domain). Interacts with TICAM1. Interacts with CNPY3. Interacts with ATG16L1. Interacts with PPP1R11. Interacts with TICAM2. Interacts with TIRAP. Post-translationally, ubiquitinated at Lys-754 by PPP1R11, leading to its degradation. Deubiquitinated by USP2. In terms of processing, glycosylation of Asn-442 is critical for secretion of the N-terminal ectodomain of TLR2.

Its subcellular location is the membrane. The protein localises to the cytoplasmic vesicle. The protein resides in the phagosome membrane. It localises to the membrane raft. In terms of biological role, cooperates with LY96 to mediate the innate immune response to bacterial lipoproteins and other microbial cell wall components. Cooperates with TLR1 or TLR6 to mediate the innate immune response to bacterial lipoproteins or lipopeptides. Acts via MYD88 and TRAF6, leading to NF-kappa-B activation, cytokine secretion and the inflammatory response. May also promote apoptosis in response to lipoproteins. Forms activation clusters composed of several receptors depending on the ligand, these clusters trigger signaling from the cell surface and subsequently are targeted to the Golgi in a lipid-raft dependent pathway. Forms the cluster TLR2:TLR6:CD14:CD36 in response to diacylated lipopeptides and TLR2:TLR1:CD14 in response to triacylated lipopeptides. The polypeptide is Toll-like receptor 2 (TLR2) (Bubalus bubalis (Domestic water buffalo)).